The chain runs to 442 residues: Probable diguanylate cyclase DgcI (442 aa).

Residues 1–23 (MSRINKFVLTVSLLIFIMISAVA) form the signal peptide. Residue cysteine 24 is the site of N-palmitoyl cysteine attachment. Cysteine 24 carries the S-diacylglycerol cysteine lipid modification. Residues 231-251 (LIIFFAALVAVISGASCLYLV) form a helical membrane-spanning segment. Positions 319 to 442 (KGGYLCLFDV…KNGRAQISWQ (124 aa)) constitute a GGDEF domain. A Mg(2+)-binding site is contributed by aspartate 327. Substrate-binding residues include asparagine 335, histidine 340, and aspartate 344. Mg(2+) is bound at residue aspartate 371.

In terms of assembly, homodimer. Mg(2+) is required as a cofactor.

It is found in the cell membrane. The enzyme catalyses 2 GTP = 3',3'-c-di-GMP + 2 diphosphate. It participates in purine metabolism; 3',5'-cyclic di-GMP biosynthesis. Catalyzes the synthesis of cyclic-di-GMP (c-di-GMP) via the condensation of 2 GTP molecules. The protein is Probable diguanylate cyclase DgcI of Escherichia coli (strain K12).